Consider the following 143-residue polypeptide: Spliceosomal protein DIB1 (143 aa).

Alanine 2 is modified (N-acetylalanine).

Belongs to the DIM1 family. As to quaternary structure, component of the U4/U6-U5 tri-snRNP complex composed of the U4, U6 and U5 snRNAs and at least PRP3, PRP4, PRP6, PRP8, PRP18, PRP31, PRP38, SNU13, SNU23, SNU66, SNU114, SPP381, SMB1, SMD1, SMD2, SMD3, SMX2, SMX3, LSM2, LSM3, LSM4, LSM5, LSM6, LSM7, LSM8, BRR2 and DIB1.

Its subcellular location is the nucleus. In terms of biological role, essential role in pre-mRNA splicing. Also essential for entry into mitosis (G2/M progression) as well as for chromosome segregation during mitosis. The protein is Spliceosomal protein DIB1 (DIB1) of Saccharomyces cerevisiae (strain ATCC 204508 / S288c) (Baker's yeast).